A 636-amino-acid chain; its full sequence is Chaperone protein DnaK (636 aa).

Position 196 is a phosphothreonine; by autocatalysis (Thr-196). A disordered region spans residues 591–636; sequence LAEAMYKSSSQPGAQEAPPTDGQPKPDEKGKDNVVDAEFVDVDDKK. A compositionally biased stretch (basic and acidic residues) spans 614–624; the sequence is PKPDEKGKDNV.

It belongs to the heat shock protein 70 family.

Functionally, acts as a chaperone. This chain is Chaperone protein DnaK, found in Solibacter usitatus (strain Ellin6076).